A 130-amino-acid polypeptide reads, in one-letter code: Small ribosomal subunit protein uS8 (130 aa).

This sequence belongs to the universal ribosomal protein uS8 family. Part of the 30S ribosomal subunit.

Its function is as follows. One of the primary rRNA binding proteins, it binds directly to 16S rRNA central domain where it helps coordinate assembly of the platform of the 30S subunit. The protein is Small ribosomal subunit protein uS8 of Methanocella arvoryzae (strain DSM 22066 / NBRC 105507 / MRE50).